A 1342-amino-acid chain; its full sequence is DNA-directed RNA polymerase subunit beta (1342 aa).

Belongs to the RNA polymerase beta chain family. The RNAP catalytic core consists of 2 alpha, 1 beta, 1 beta' and 1 omega subunit. When a sigma factor is associated with the core the holoenzyme is formed, which can initiate transcription.

The enzyme catalyses RNA(n) + a ribonucleoside 5'-triphosphate = RNA(n+1) + diphosphate. In terms of biological role, DNA-dependent RNA polymerase catalyzes the transcription of DNA into RNA using the four ribonucleoside triphosphates as substrates. This is DNA-directed RNA polymerase subunit beta from Buchnera aphidicola subsp. Schizaphis graminum (strain Sg).